The primary structure comprises 112 residues: UPF0060 membrane protein SCO3297 (112 aa).

A run of 4 helical transmembrane segments spans residues 8-28 (ALFVVAALFEIGGAWLVWQGV), 33-53 (GWLWAAGGVLALGAYGFVATF), 62-82 (ILAAYGGIFVTGSILWGVVAD), and 88-108 (RWDIAGALVCLAGMALIMWAP).

This sequence belongs to the UPF0060 family.

It is found in the cell membrane. The polypeptide is UPF0060 membrane protein SCO3297 (Streptomyces coelicolor (strain ATCC BAA-471 / A3(2) / M145)).